A 286-amino-acid polypeptide reads, in one-letter code: Polyamine aminopropyltransferase (286 aa).

In terms of domain architecture, PABS spans 2-237 (DLWFSEVHTP…GYWLFGFASK (236 aa)). Q31 is an S-methyl-5'-thioadenosine binding site. D86 serves as a coordination point for spermidine. S-methyl-5'-thioadenosine contacts are provided by residues E106 and 137-138 (NG). Residue D155 is the Proton acceptor of the active site.

Belongs to the spermidine/spermine synthase family. As to quaternary structure, homodimer or homotetramer.

The protein localises to the cytoplasm. It carries out the reaction S-adenosyl 3-(methylsulfanyl)propylamine + putrescine = S-methyl-5'-thioadenosine + spermidine + H(+). The protein operates within amine and polyamine biosynthesis; spermidine biosynthesis; spermidine from putrescine: step 1/1. Catalyzes the irreversible transfer of a propylamine group from the amino donor S-adenosylmethioninamine (decarboxy-AdoMet) to putrescine (1,4-diaminobutane) to yield spermidine. This chain is Polyamine aminopropyltransferase, found in Streptococcus pneumoniae serotype 4 (strain ATCC BAA-334 / TIGR4).